A 138-amino-acid polypeptide reads, in one-letter code: U1 small nuclear ribonucleoprotein C (138 aa).

The segment at 4-36 adopts a Matrin-type zinc-finger fold; sequence FYCDYCDTYLTHDSPSVRKTHCSGRKHKENVRD. A Phosphotyrosine modification is found at Tyr8. Ser17 bears the Phosphoserine mark. Lys52 is subject to N6-acetyllysine. Residues 62-99 form a disordered region; the sequence is IPPNLFSAPPLGGPMIPPPHPSMMGPPPPGMMPVGPPP. Residues 72–99 show a composition bias toward pro residues; it reads LGGPMIPPPHPSMMGPPPPGMMPVGPPP.

It belongs to the U1 small nuclear ribonucleoprotein C family. Component of the U1 snRNP. The U1 snRNP is composed of the U1 snRNA and the 7 core Sm proteins SNRPB, SNRPD1, SNRPD2, SNRPD3, SNRPE, SNRPF and SNRPG that assemble in a heptameric protein ring on the Sm site of the small nuclear RNA to form the core snRNP, and at least 3 U1 snRNP-specific proteins SNRNP70/U1-70K, SNRPA/U1-A and SNRPC/U1-C. SNRPC/U1-C interacts with U1 snRNA and the 5' splice-site region of the pre-mRNA. Interacts (via N-terminus) with TIA1 (via C-terminus); thereby promoting spliceosomal U1 snRNP recruitment to 5' splice sites.

It localises to the nucleus. In terms of biological role, component of the spliceosomal U1 snRNP, which is essential for recognition of the pre-mRNA 5' splice-site and the subsequent assembly of the spliceosome. SNRPC/U1-C is directly involved in initial 5' splice-site recognition for both constitutive and regulated alternative splicing. The interaction with the 5' splice-site seems to precede base-pairing between the pre-mRNA and the U1 snRNA. Stimulates commitment or early (E) complex formation by stabilizing the base pairing of the 5' end of the U1 snRNA and the 5' splice-site region. This Monodelphis domestica (Gray short-tailed opossum) protein is U1 small nuclear ribonucleoprotein C.